An 882-amino-acid chain; its full sequence is Cadherin-1 (882 aa).

The first 22 residues, 1–22 (MGPWSRSLSALLLLLQVSSWLC), serve as a signal peptide directing secretion. Positions 23–154 (QEPEPCHPGF…SSSGLRRRKR (132 aa)) are excised as a propeptide. Asn-144 is a glycosylation site (N-linked (GlcNAc...) asparagine). 5 consecutive Cadherin domains span residues 155–262 (DWVI…KPEF), 263–375 (TQEV…PPVF), 376–486 (NPTT…APIF), 487–593 (VPPE…DNAP), and 594–697 (IPEP…VCKK). Topologically, residues 155–709 (DWVIPPISCP…PIEAGLQIPA (555 aa)) are extracellular. Asp-257 lines the Ca(2+) pocket. O-linked (Man...) serine glycosylation occurs at Ser-280. Thr-285 carries O-linked (Man...) threonine glycosylation. A Ca(2+)-binding site is contributed by Asp-288. 4 O-linked (Man...) threonine glycosylation sites follow: Thr-358, Thr-470, Thr-472, and Thr-509. An N-linked (GlcNAc...) asparagine glycan is attached at Asn-558. Thr-576, Thr-578, and Thr-580 each carry an O-linked (Man...) threonine glycan. A glycan (N-linked (GlcNAc...) asparagine) is linked at Asn-637. Residues 710 to 730 (ILGILGGILALLILILLLLLF) form a helical membrane-spanning segment. Residues 731-882 (LRRRAVVKEP…ADMYGGGEDD (152 aa)) are Cytoplasmic-facing. The tract at residues 747-767 (DTRDNVYYYDEEGGGEEDQDF) is disordered. Phosphotyrosine; by SRC occurs at positions 753, 754, and 755. A compositionally biased stretch (acidic residues) spans 755–767 (YDEEGGGEEDQDF). The required for binding CTNND1 and PSEN1 stretch occupies residues 758-769 (EGGGEEDQDFDL). Phosphoserine is present on residues Ser-770, Ser-793, Ser-838, Ser-840, and Ser-846. A required for binding alpha, beta and gamma catenins region spans residues 811–882 (IDENLKAADT…ADMYGGGEDD (72 aa)).

As to quaternary structure, homodimer; disulfide-linked. Component of an E-cadherin/ catenin adhesion complex composed of at least E-cadherin/CDH1, beta-catenin/CTNNB1 or gamma-catenin/JUP, and potentially alpha-catenin/CTNNA1; the complex is located to adherens junctions. Found in a complex composed of CDH1, RAP1A and PKP3; PKP3 acts as a scaffold protein within the complex, the complex is required for CDH1 localization to mature desmosome cell junctions. Interacts with the TRPV4 and CTNNB1 complex. Interacts with CTNND1. The stable association of CTNNA1 is controversial as CTNNA1 was shown not to bind to F-actin when assembled in the complex. Alternatively, the CTNNA1-containing complex may be linked to F-actin by other proteins such as LIMA1. Interaction with PSEN1, cleaves CDH1 resulting in the disassociation of cadherin-based adherens junctions (CAJs). Interacts with AJAP1 and DLGAP5. Interacts with TBC1D2. Interacts with LIMA1. Interacts with CAV1. Interacts with PIP5K1C. Interacts with RAB8B. Interacts with DDR1; this stabilizes CDH1 at the cell surface and inhibits its internalization. Interacts with RAPGEF2. Interacts with KLRG1. Forms a ternary complex composed of ADAM10, CADH1 and EPHA4; within the complex, CADH1 is cleaved by ADAM10 which disrupts adherens junctions. Interacts with SPEF1. Interacts with CTNNB1 and PKP2. Interacts with AMOTL2; the interaction may facilitate binding of radial actin fibers to cell junction complexes. Interacts with DSG3; the interaction is required for CDH1 localization to developing adherens junctions. In terms of processing, during apoptosis or with calcium influx, cleaved by a membrane-bound metalloproteinase (ADAM10), PS1/gamma-secretase and caspase-3. Processing by the metalloproteinase, induced by calcium influx, causes disruption of cell-cell adhesion and the subsequent release of beta-catenin into the cytoplasm. The residual membrane-tethered cleavage product is rapidly degraded via an intracellular proteolytic pathway. Cleavage by caspase-3 releases the cytoplasmic tail resulting in disintegration of the actin microfilament system. The gamma-secretase-mediated cleavage promotes disassembly of adherens junctions. During development of the cochlear organ of Corti, cleavage by ADAM10 at adherens junctions promotes pillar cell separation. Post-translationally, N-glycosylation at Asn-637 is essential for expression, folding and trafficking. Addition of bisecting N-acetylglucosamine by MGAT3 modulates its cell membrane location. Ubiquitinated by a SCF complex containing SKP2, which requires prior phosphorylation by CK1/CSNK1A1. Ubiquitinated by CBLL1/HAKAI, requires prior phosphorylation at Tyr-754. In terms of processing, O-glycosylated. O-manosylated by TMTC1, TMTC2, TMTC3 or TMTC4. Thr-285 and Thr-509 are O-mannosylated by TMTC2 or TMTC4 but not TMTC1 or TMTC3.

Its subcellular location is the cell junction. It is found in the adherens junction. It localises to the cell membrane. The protein localises to the endosome. The protein resides in the golgi apparatus. Its subcellular location is the trans-Golgi network. It is found in the cytoplasm. It localises to the desmosome. Its function is as follows. Cadherins are calcium-dependent cell adhesion proteins. They preferentially interact with themselves in a homophilic manner in connecting cells; cadherins may thus contribute to the sorting of heterogeneous cell types. CDH1 is involved in mechanisms regulating cell-cell adhesions, mobility and proliferation of epithelial cells. Promotes organization of radial actin fiber structure and cellular response to contractile forces, via its interaction with AMOTL2 which facilitates anchoring of radial actin fibers to CDH1 junction complexes at the cell membrane. Plays a role in the early stages of desmosome cell-cell junction formation via facilitating the recruitment of DSG2 and DSP to desmosome plaques. Has a potent invasive suppressor role. It is a ligand for integrin alpha-E/beta-7. E-Cad/CTF2 promotes non-amyloidogenic degradation of Abeta precursors. Has a strong inhibitory effect on APP C99 and C83 production. The chain is Cadherin-1 (CDH1) from Pongo abelii (Sumatran orangutan).